Here is a 363-residue protein sequence, read N- to C-terminus: Peptide chain release factor 1 (363 aa).

Gln237 is modified (N5-methylglutamine).

It belongs to the prokaryotic/mitochondrial release factor family. Post-translationally, methylated by PrmC. Methylation increases the termination efficiency of RF1.

It is found in the cytoplasm. Its function is as follows. Peptide chain release factor 1 directs the termination of translation in response to the peptide chain termination codons UAG and UAA. This chain is Peptide chain release factor 1, found in Mesoplasma florum (strain ATCC 33453 / NBRC 100688 / NCTC 11704 / L1) (Acholeplasma florum).